Consider the following 109-residue polypeptide: Protein phosphatase 1 regulatory subunit 1C (109 aa).

The disordered stretch occupies residues 25–109 (AEQIRKRRPT…TNEREEQRDH (85 aa)). Over residues 45-54 (NPPEIDDKRV) the composition is skewed to basic and acidic residues. Residues 55 to 75 (PNTQGELQNASPKQRKQSVYT) are compositionally biased toward polar residues. Positions 100-109 (TNEREEQRDH) are enriched in basic and acidic residues.

The protein belongs to the protein phosphatase inhibitor 1 family.

The protein resides in the cytoplasm. Its function is as follows. May increase cell susceptibility to TNF-induced apoptosis. This Pongo abelii (Sumatran orangutan) protein is Protein phosphatase 1 regulatory subunit 1C (PPP1R1C).